A 161-amino-acid chain; its full sequence is Ribonuclease H (161 aa).

Positions 5 to 149 constitute an RNase H type-1 domain; that stretch reads EKLAIAAATD…VDAIAVAFSK (145 aa). D14, E53, D78, and D141 together coordinate Mg(2+).

It belongs to the RNase H family. As to quaternary structure, monomer. It depends on Mg(2+) as a cofactor.

It is found in the cytoplasm. It carries out the reaction Endonucleolytic cleavage to 5'-phosphomonoester.. Its function is as follows. Endonuclease that specifically degrades the RNA of RNA-DNA hybrids. The sequence is that of Ribonuclease H from Prochlorococcus marinus (strain NATL2A).